We begin with the raw amino-acid sequence, 219 residues long: Occludin/ELL domain-containing protein 1 (219 aa).

The segment at 1-110 (MQIHAGPASR…DYELKYPPVT (110 aa)) is disordered. Residues 17 to 43 (LARLSGPEATCNSRPAARGRQRAAAPR) are compositionally biased toward low complexity. Positions 72-93 (VFADELRPREPLHPEKHPRDLG) are enriched in basic and acidic residues. In terms of domain architecture, OCEL spans 100 to 210 (PDYELKYPPV…QIRKFDDQQD (111 aa)).

Belongs to the ELL/occludin family.

The polypeptide is Occludin/ELL domain-containing protein 1 (Ocel1) (Mus musculus (Mouse)).